A 189-amino-acid polypeptide reads, in one-letter code: Crossover junction endodeoxyribonuclease RuvC (189 aa).

Active-site residues include Asp-7, Glu-68, and Asp-141. Positions 7, 68, and 141 each coordinate Mg(2+).

Belongs to the RuvC family. Homodimer which binds Holliday junction (HJ) DNA. The HJ becomes 2-fold symmetrical on binding to RuvC with unstacked arms; it has a different conformation from HJ DNA in complex with RuvA. In the full resolvosome a probable DNA-RuvA(4)-RuvB(12)-RuvC(2) complex forms which resolves the HJ. Requires Mg(2+) as cofactor.

It localises to the cytoplasm. The enzyme catalyses Endonucleolytic cleavage at a junction such as a reciprocal single-stranded crossover between two homologous DNA duplexes (Holliday junction).. In terms of biological role, the RuvA-RuvB-RuvC complex processes Holliday junction (HJ) DNA during genetic recombination and DNA repair. Endonuclease that resolves HJ intermediates. Cleaves cruciform DNA by making single-stranded nicks across the HJ at symmetrical positions within the homologous arms, yielding a 5'-phosphate and a 3'-hydroxyl group; requires a central core of homology in the junction. The consensus cleavage sequence is 5'-(A/T)TT(C/G)-3'. Cleavage occurs on the 3'-side of the TT dinucleotide at the point of strand exchange. HJ branch migration catalyzed by RuvA-RuvB allows RuvC to scan DNA until it finds its consensus sequence, where it cleaves and resolves the cruciform DNA. The sequence is that of Crossover junction endodeoxyribonuclease RuvC from Rhodococcus opacus (strain B4).